The sequence spans 846 residues: uncharacterized protein (846 aa).

WD repeat units lie at residues 88–129, 132–172, 175–215, 219–258, 262–309, and 313–348; these read TKHI…LLYD, EHSR…STIT, GNSE…LPFL, AHNG…KKSL, NNVS…IPYR, and CHDS…NAFN. The tract at residues 541–560 is disordered; the sequence is PREASTPSESSNSSIESEDN. Residues 544-555 show a composition bias toward low complexity; that stretch reads ASTPSESSNSSI. The stretch at 624 to 663 is one WD 7 repeat; it reads FHRSSVTSASIKSREAVLSAGNSSRRASIFLDQLSLHGDT.

This is an uncharacterized protein from Schizosaccharomyces pombe (strain 972 / ATCC 24843) (Fission yeast).